The primary structure comprises 1723 residues: Lys-gingipain (1723 aa).

Positions 1–24 (MRKLLLLIAASLLGVGLYAQSAKI) are cleaved as a signal peptide. The propeptide occupies 25–228 (KLDAPTTRTT…ETAYKQLFNR (204 aa)). Ca(2+) is bound by residues Asp313, Asp337, Asp339, Phe341, and Glu343. His444 serves as the catalytic Proton donor. Cys477 serves as the catalytic Nucleophile. Ca(2+) is bound by residues Phe482 and Glu491. Positions 964 to 985 (WDAPNGTPNPNPNPNPGTTTLS) are disordered. The Ca(2+) site is built by Ser987, Glu989, Asp1000, Asp1002, Asp1004, His1006, Ser1021, Gly1023, Asn1042, Asp1145, Glu1146, Asp1430, Glu1432, Asp1444, Asp1446, Asp1448, Asn1450, Ser1480, Asn1495, and Asp1585.

This sequence belongs to the peptidase C25 family. Proteolytically cleaved into a catalytic subunit and three adhesins. Arg-gingipain is involved in this post-translational processing.

It is found in the secreted. It carries out the reaction Endopeptidase with strict specificity for lysyl bonds.. With respect to regulation, activated by the thiol-reducing agents cysteine, 2-mercaptoethanol and dithiothreitol. Inhibited by iodacetamide, iodoacetic acid, leupeptin, tosyl-L-lysine and tosyl-L-phenylalanine. Not inhibited by elastatinal, chymostatin, cystatins, alpha1-antichymotrypsin or the serine protease inhibitors phenylmethylsulfonyl fluoride and diisopropylfluorophosphate. Not inhibited by metal ion chelators. Inhibited by the heavy metal ions Fe(3+), Zn(2+), Cu(2+) and Mn(2+). Its function is as follows. Cysteine proteinase with a strong preference for substrates with Lys in the P1 position. Hydrolyzes bovine hemoglobin, bovine serum albumin, casein, human placental type I collagen and human IgA and IgG. Disrupts the functions of polymorphonuclear leukocytes. May act as a virulence factor in the development of peridontal disease. Involved in the coaggregation of P.gingivalis with other oral bacteria. The polypeptide is Lys-gingipain (Porphyromonas gingivalis (strain ATCC 33277 / DSM 20709 / CIP 103683 / JCM 12257 / NCTC 11834 / 2561)).